The primary structure comprises 248 residues: tRNA pseudouridine synthase A (248 aa).

D53 (nucleophile) is an active-site residue. Substrate is bound at residue Y111.

Belongs to the tRNA pseudouridine synthase TruA family. Homodimer.

The enzyme catalyses uridine(38/39/40) in tRNA = pseudouridine(38/39/40) in tRNA. Its function is as follows. Formation of pseudouridine at positions 38, 39 and 40 in the anticodon stem and loop of transfer RNAs. The protein is tRNA pseudouridine synthase A of Listeria monocytogenes serotype 4a (strain HCC23).